The primary structure comprises 276 residues: Adenylate kinase (276 aa).

52–57 (GAGKGT) contributes to the ATP binding site. The tract at residues 72 to 101 (ATGDMLRAQVAAKTPLGREAKKIMDAGGLV) is NMP. Residues Thr-73, Arg-78, 99–101 (GLV), 128–131 (GFPR), and Gln-135 contribute to the AMP site. The interval 169–206 (GRLVHPASGRSYHKIFNPPKAPMTDDVTGEPLIQRSDD) is LID. ATP is bound by residues Arg-170 and 179–180 (SY). Residues Arg-203 and Arg-214 each coordinate AMP. Gln-242 contacts ATP.

The protein belongs to the adenylate kinase family. AK2 subfamily. In terms of assembly, monomer.

The protein resides in the cytoplasm. It is found in the cytosol. The protein localises to the mitochondrion intermembrane space. It catalyses the reaction AMP + ATP = 2 ADP. Functionally, catalyzes the reversible transfer of the terminal phosphate group between ATP and AMP. Plays an important role in cellular energy homeostasis and in adenine nucleotide metabolism. Adenylate kinase activity is critical for regulation of the phosphate utilization and the AMP de novo biosynthesis pathways. This is Adenylate kinase (adk1) from Pyrenophora tritici-repentis (strain Pt-1C-BFP) (Wheat tan spot fungus).